We begin with the raw amino-acid sequence, 619 residues long: Cationic amino acid transporter 3 (619 aa).

The Cytoplasmic portion of the chain corresponds to 1 to 36; sequence MLWQALRRFGQKLVRRRLLELGMGETRLARCLSTLD. The chain crosses the membrane as a helical span at residues 37–57; that stretch reads LVALGVGSTLGAGVYVLAGEV. Over 58–61 the chain is Extracellular; that stretch reads AKEK. Residues 62 to 82 traverse the membrane as a helical segment; the sequence is AGPSIVICFLVAALSSVLAGL. The Cytoplasmic portion of the chain corresponds to 83-107; that stretch reads CYAEFGARVPGSGSAYLYSYVTVGE. A helical membrane pass occupies residues 108-128; sequence LWAFTTGWNLILSYVIGTASV. The Extracellular portion of the chain corresponds to 129–162; it reads ARAWSSAFDNLIGNHISQTLKGTILLNMPHVLAE. A helical membrane pass occupies residues 163 to 183; it reads YPDFFALALVLLLTGLLVLGA. The Cytoplasmic segment spans residues 184 to 191; that stretch reads NESGLVTK. Residues 192–212 form a helical membrane-spanning segment; sequence VFTGMNLLVLGFVIISGFIKG. Topologically, residues 213–244 are extracellular; sequence ELRNWKLTKEDYCLTMSESNGTCSLDSMGSGG. An N-linked (GlcNAc...) asparagine glycan is attached at N232. A helical membrane pass occupies residues 245-265; the sequence is FMPFGLEGILRGAATCFYAFV. The Cytoplasmic portion of the chain corresponds to 266–285; that stretch reads GFDCIATTGEEAQNPQRSIP. Residues 286 to 306 traverse the membrane as a helical segment; the sequence is MGIVISLSICFLAYFGVSSAL. Topologically, residues 307–335 are extracellular; that stretch reads TLMMPYYKLQPESPLPEAFTYVGWEPARY. A helical membrane pass occupies residues 336–356; it reads LVAIGSLCALSTSLLGSMFPM. Over 357-382 the chain is Cytoplasmic; it reads PRVIYAMAEDGLLFRVLARVHNGTHT. A helical transmembrane segment spans residues 383–403; it reads PIVATVVSGVIAAFMAFLFEL. Residues 404–406 are Extracellular-facing; sequence TDL. A helical membrane pass occupies residues 407–427; that stretch reads VDLMSIGTLLAYSLVSICVLI. Over 428-475 the chain is Cytoplasmic; that stretch reads LRYQPDQEMKNGEEEVELQEERTLEAEKLTVQALFCQVDSIPTLLSGR. A helical membrane pass occupies residues 476 to 496; that stretch reads IVYVCSSLLAVLLTVLCLVLT. The Extracellular portion of the chain corresponds to 497–507; sequence WWTTPLHSGDP. A helical membrane pass occupies residues 508 to 528; it reads VWVTVVVLILGLILGISGVIW. Residues 529 to 540 lie on the Cytoplasmic side of the membrane; that stretch reads RQPQNRTPLHFK. Residues 541–561 form a helical membrane-spanning segment; that stretch reads VPVVPLLPLVSIFVNVYLMMQ. The Extracellular segment spans residues 562-569; it reads MTADTWAR. A helical transmembrane segment spans residues 570 to 590; sequence FGVWMLIGFAIYFGYGIQHSV. Over 591–619 the chain is Cytoplasmic; that stretch reads EEVKNHQTLPKTRPQTIDLDLTTSCVHSI. T606 is modified (phosphothreonine). Position 618 is a phosphoserine (S618).

The protein belongs to the amino acid-polyamine-organocation (APC) superfamily. Cationic amino acid transporter (CAT) (TC 2.A.3.3) family. In terms of processing, N-glycosylated. As to expression, highly expressed in brain.

The protein localises to the cell membrane. The catalysed reaction is L-arginine(in) = L-arginine(out). It carries out the reaction L-lysine(in) = L-lysine(out). The enzyme catalyses L-ornithine(in) = L-ornithine(out). Its activity is regulated as follows. Inhibited by high potassium ions-induced membrane depolarization. In terms of biological role, uniporter that mediates the uptake of cationic L-amino acids such as L-arginine, L-lysine and L-ornithine. The transport is sodium ions- and pH-independent, moderately trans-stimulated and is mediated by passive diffusion. In Rattus norvegicus (Rat), this protein is Cationic amino acid transporter 3.